The primary structure comprises 332 residues: Ephrin-B2a (332 aa).

The signal sequence occupies residues 1–24; sequence MGDSLWRYYFGVLVIACKVNLSRA. N-linked (GlcNAc...) asparagine glycans are attached at residues N20 and N33. The region spanning 25 to 161 is the Ephrin RBD domain; it reads LILDSIYWNT…TKSMKIIMKV (137 aa). The Extracellular portion of the chain corresponds to 25–225; the sequence is LILDSIYWNT…VIGSEVALFA (201 aa). Intrachain disulfides connect C59-C98 and C86-C150. An N-linked (GlcNAc...) asparagine glycan is attached at N136. A disordered region spans residues 162–212; it reads GQNPSDPISPKDYPTSYPPKHPDLGGKDSKSNEVLKPDASPHGEDKGDGNK. Residues 181 to 210 are compositionally biased toward basic and acidic residues; the sequence is KHPDLGGKDSKSNEVLKPDASPHGEDKGDG. N-linked (GlcNAc...) asparagine glycosylation is present at N211. A helical transmembrane segment spans residues 226 to 246; that stretch reads CIASASVIVIIIIIMLVFLLL. Residues 247–332 lie on the Cytoplasmic side of the membrane; the sequence is KYRRRHRKHS…QSPANIYYKV (86 aa). Residues 255 to 285 are disordered; the sequence is HSPQHATTLSLSTLATPKRGGSGGNNNGSEP. Low complexity predominate over residues 260–270; the sequence is ATTLSLSTLAT. The PDZ-binding motif lies at 330 to 332; that stretch reads YKV.

Belongs to the ephrin family. In terms of assembly, binds to the receptor tyrosine kinase ephb4. Inducible phosphorylation of tyrosine residues in the cytoplasmic domain.

The protein localises to the cell membrane. Functionally, cell surface transmembrane ligand for Eph receptors, a family of receptor tyrosine kinases which are crucial for migration, repulsion and adhesion during neuronal, vascular and epithelial development. Binds promiscuously Eph receptors residing on adjacent cells, leading to contact-dependent bidirectional signaling into neighboring cells. The signaling pathway downstream of the receptor is referred to as forward signaling while the signaling pathway downstream of the ephrin ligand is referred to as reverse signaling. Together with ephb4 may play a central role in heart morphogenesis and angiogenesis through regulation of cell adhesion and cell migration. The chain is Ephrin-B2a (efnb2a) from Danio rerio (Zebrafish).